A 147-amino-acid polypeptide reads, in one-letter code: Phosphoribosyl-AMP cyclohydrolase 2 (147 aa).

Asp-99 is a binding site for Mg(2+). Cys-100 is a binding site for Zn(2+). Mg(2+) contacts are provided by Asp-101 and Asp-103. Residues Cys-116 and Cys-123 each coordinate Zn(2+).

It belongs to the PRA-CH family. As to quaternary structure, homodimer. Mg(2+) serves as cofactor. The cofactor is Zn(2+).

The protein localises to the cytoplasm. The enzyme catalyses 1-(5-phospho-beta-D-ribosyl)-5'-AMP + H2O = 1-(5-phospho-beta-D-ribosyl)-5-[(5-phospho-beta-D-ribosylamino)methylideneamino]imidazole-4-carboxamide. Its pathway is amino-acid biosynthesis; L-histidine biosynthesis; L-histidine from 5-phospho-alpha-D-ribose 1-diphosphate: step 3/9. Functionally, catalyzes the hydrolysis of the adenine ring of phosphoribosyl-AMP. This is Phosphoribosyl-AMP cyclohydrolase 2 from Pseudomonas fluorescens (strain ATCC BAA-477 / NRRL B-23932 / Pf-5).